The sequence spans 481 residues: PRAME family member 22 (481 aa).

The LRR 1; degenerate repeat unit spans residues 99-126 (RWKLQVLELRDVDENFWTIWSGARPLSC). An LRR 2; degenerate repeat occupies 181 to 205 (HLCCTKVVNYSMSILNFRNILETVY). Residues 206-232 (PDSIQVLEIWNMCWPCMIVEFSRYLSQ) form an LRR 3; degenerate repeat. Residues 233–267 (MRNLRKLFISDGCRYLLSSDSQEQLVAEFSSVLLR) form an LRR 4; degenerate repeat. LRR repeat units follow at residues 268 to 293 (LEYL…IRCL), 294 to 325 (RSPL…SQLK), 326 to 344 (QLNL…PLRA), 350 to 377 (AATL…ALSC), and 378 to 402 (CSNL…LLRH).

This sequence belongs to the PRAME family.

This Homo sapiens (Human) protein is PRAME family member 22.